The sequence spans 149 residues: Transcriptional repressor NrdR (149 aa).

Residues 3–34 (CPFCSAVDTKVIDSRLVAEGHQVRRRRECLLC) fold into a zinc finger. The 91-residue stretch at 49–139 (PRVIKSNGSR…VYRSFEDIRE (91 aa)) folds into the ATP-cone domain.

It belongs to the NrdR family. Zn(2+) is required as a cofactor.

Functionally, negatively regulates transcription of bacterial ribonucleotide reductase nrd genes and operons by binding to NrdR-boxes. This is Transcriptional repressor NrdR from Aeromonas salmonicida (strain A449).